Reading from the N-terminus, the 277-residue chain is Phosphate import ATP-binding protein PstB (277 aa).

Residues 31–272 (IEVPGLSLFY…PAKKQTEDYI (242 aa)) form the ABC transporter domain. Residue 63–70 (GPSGCGKS) coordinates ATP.

It belongs to the ABC transporter superfamily. Phosphate importer (TC 3.A.1.7) family. In terms of assembly, the complex is composed of two ATP-binding proteins (PstB), two transmembrane proteins (PstC and PstA) and a solute-binding protein (PstS).

The protein localises to the cell inner membrane. The enzyme catalyses phosphate(out) + ATP + H2O = ADP + 2 phosphate(in) + H(+). Part of the ABC transporter complex PstSACB involved in phosphate import. Responsible for energy coupling to the transport system. The chain is Phosphate import ATP-binding protein PstB from Pseudomonas putida (Arthrobacter siderocapsulatus).